Reading from the N-terminus, the 407-residue chain is Monooxygenase 2 (407 aa).

This sequence belongs to the 3-hydroxybenzoate 6-hydroxylase family. In terms of assembly, monomer. It depends on FAD as a cofactor. Expressed in seeds, seedlings, roots, leaves, flowers, pollen and siliques.

The chain is Monooxygenase 2 from Arabidopsis thaliana (Mouse-ear cress).